The chain runs to 604 residues: Dopamine receptor 3 (604 aa).

At M1–A23 the chain is on the extracellular side. Residues A24–L44 form a helical membrane-spanning segment. At S45–M58 the chain is on the cytoplasmic side. Residues L59 to V79 form a helical membrane-spanning segment. Topologically, residues Y80–H96 are extracellular. C95 and C170 form a disulfide bridge. Residues V97–S117 form a helical membrane-spanning segment. Residues L118–M141 are Cytoplasmic-facing. Residues I142 to V162 traverse the membrane as a helical segment. The Extracellular segment spans residues N163 to M179. A helical transmembrane segment spans residues I180 to I200. The Cytoplasmic segment spans residues F201–A520. The disordered stretch occupies residues S399 to P430. Residues T521 to L541 traverse the membrane as a helical segment. The Extracellular portion of the chain corresponds to H542–G559. Residues F560 to I580 traverse the membrane as a helical segment. Residues Y581 to R604 lie on the Cytoplasmic side of the membrane.

The protein belongs to the G-protein coupled receptor 1 family.

Its subcellular location is the cell membrane. In terms of biological role, receptor for dopamine. The activity of this receptor is mediated by G proteins which activate adenylyl cyclase. In terms of antagonist responses, would be classed with the D2-like dopamine receptor group. Mediates the effect of dopamine on the inhibition of locomotion. Acts as an antagonist of dop-1. In Caenorhabditis briggsae, this protein is Dopamine receptor 3.